A 729-amino-acid polypeptide reads, in one-letter code: Polyribonucleotide nucleotidyltransferase (729 aa).

The tract at residues 399–419 (YMHNYNFPPYSTGETGRVGSP) is disordered. The Mg(2+) site is built by Asp-509 and Asp-515. Positions 575 to 634 (PRVISVKIPVDKIGEVIGPKGKMINQIQADSGAEITVEDDGTIYIGAADGPAAETARSAI) constitute a KH domain. The region spanning 646–718 (GERYLGTIVK…ARGKISLAPG (73 aa)) is the S1 motif domain.

It belongs to the polyribonucleotide nucleotidyltransferase family. It depends on Mg(2+) as a cofactor.

The protein localises to the cytoplasm. The catalysed reaction is RNA(n+1) + phosphate = RNA(n) + a ribonucleoside 5'-diphosphate. Functionally, involved in mRNA degradation. Catalyzes the phosphorolysis of single-stranded polyribonucleotides processively in the 3'- to 5'-direction. This Parafrankia sp. (strain EAN1pec) protein is Polyribonucleotide nucleotidyltransferase.